The following is a 213-amino-acid chain: MNWLEERMPGIGRIAKDIAEHPVPSHTLNIFYCLGGLTLLCFIIQCLTGVFLAFYYKPTPEAAFASVQMITNEVRFGSVIRSMHHWSCQLMILLVFLHMLRVYYTGAFKKPRELNWVAGCFLLVLSLGLAFTGYLLPYEQLSYWASVIGAETANTLPVIGPTLKIMMQGGIKVTAEMLSRFYVLHVMILPAITIGFLVAHFIMIRVQGISDPM.

A helical membrane pass occupies residues 30-50; that stretch reads IFYCLGGLTLLCFIIQCLTGV. Residue Cys33 participates in heme c binding. His84 and His98 together coordinate heme b. The next 3 helical transmembrane spans lie at 88–108, 114–134, and 184–204; these read CQLMILLVFLHMLRVYYTGAF, LNWVAGCFLLVLSLGLAFTGY, and LHVMILPAITIGFLVAHFIMI. The heme b site is built by His185 and His200.

Belongs to the cytochrome b family. PetB subfamily. In terms of assembly, the subunits of the cytochrome bc complex are a Rieske Fe-S protein (PetC), cytochrome b6 (PetB), subunit IV (PetD), and a diheme cytochrome c (PetX). Requires heme b as cofactor. The cofactor is heme c.

It is found in the cell membrane. Functionally, component of the cytochrome bc complex which donates electrons to the photosynthetic reaction center. This Heliobacterium modesticaldum (strain ATCC 51547 / Ice1) protein is Cytochrome b6.